The sequence spans 410 residues: Arginine deiminase (410 aa).

Cys-399 functions as the Amidino-cysteine intermediate in the catalytic mechanism.

Belongs to the arginine deiminase family.

The protein localises to the cytoplasm. The catalysed reaction is L-arginine + H2O = L-citrulline + NH4(+). The protein operates within amino-acid degradation; L-arginine degradation via ADI pathway; carbamoyl phosphate from L-arginine: step 1/2. The sequence is that of Arginine deiminase from Treponema denticola (strain ATCC 35405 / DSM 14222 / CIP 103919 / JCM 8153 / KCTC 15104).